Here is a 256-residue protein sequence, read N- to C-terminus: Ras-related protein RabJ (256 aa).

GTP is bound at residue 16–23 (GSSDVGKT). An Effector region motif is present at residues 38-46 (LTSTIGASF). GTP is bound by residues 64-68 (DSAGQ) and 122-125 (NKID). Residues 229–256 (NGHLQGSINGHNNQNSTNYSDNSDQCCG) form a disordered region. Over residues 230-256 (GHLQGSINGHNNQNSTNYSDNSDQCCG) the composition is skewed to polar residues. Residues cysteine 254 and cysteine 255 are each lipidated (S-geranylgeranyl cysteine).

It belongs to the small GTPase superfamily. Rab family.

The protein resides in the cell membrane. The sequence is that of Ras-related protein RabJ (rabJ) from Dictyostelium discoideum (Social amoeba).